The primary structure comprises 678 residues: ATP-dependent RNA helicase DHX58 (678 aa).

Residues 11-188 (IMPALEGKNI…DGAINHVLQL (178 aa)) enclose the Helicase ATP-binding domain. Position 24–31 (24–31 (LPTGAGKT)) interacts with ATP. A DECH box motif is present at residues 131 to 134 (DECH). Positions 350-514 (KLEMLEKILQ…QAVAAVQKMD (165 aa)) constitute a Helicase C-terminal domain. Residues 489–546 (ELKRELINEALETLMEQAVAAVQKMDQAEYQAKIRDLQQAALTKRAAQAAQRENQRQQ) are a coiled coil. Residues 539-669 (QRENQRQQFP…PDFDFLQHCA (131 aa)) enclose the RLR CTR domain. Positions 556, 559, 612, and 615 each coordinate Zn(2+). The interval 572-655 (VEGTHHVNVN…RIQAKKWSRV (84 aa)) is RNA-binding.

It belongs to the helicase family. RLR subfamily. Monomer in the absence of dsRNA. Homodimer in the presence of dsRNA. Interacts with RIGI (via CARD domain), MAVS/IPS1 and DDX60. Found in a complex with RIGI and IFIH1/MDA5. Interacts with ANKRD17. Directly interacts with ATG5 and ATG12, either as ATG5 and ATG12 monomers or as ATG12-ATG5 conjugates. As to quaternary structure, (Microbial infection) Interacts (via helicase C-terminal domain) with non-structural protein V of paramyxoviruses including human parainfluenza 2 virus, human parainfluenza 5 virus, measles virus, mumps virus, hendra virus and nipah virus. As to expression, expressed in testis, nerve and spleen. Also expressed in the brain.

The protein localises to the cytoplasm. It carries out the reaction ATP + H2O = ADP + phosphate + H(+). Acts as a regulator of RIGI and IFIH1/MDA5 mediated antiviral signaling. Cannot initiate antiviral signaling as it lacks the CARD domain required for activating MAVS/IPS1-dependent signaling events. Can have both negative and positive regulatory functions related to RIGI and IFIH1/MDA5 signaling and this role in regulating signaling may be complex and could probably depend on characteristics of the infecting virus or target cells, or both. Its inhibitory action on RIG-I signaling may involve the following mechanisms: competition with RIGI for binding to the viral RNA, binding to RIGI and inhibiting its dimerization and interaction with MAVS/IPS1, competing with IKBKE in its binding to MAVS/IPS1 thereby inhibiting activation of interferon regulatory factor 3 (IRF3). Its positive regulatory role may involve unwinding or stripping nucleoproteins of viral RNA thereby facilitating their recognition by RIGI and IFIH1/MDA5. Involved in the innate immune response to various RNA viruses and some DNA viruses such as poxviruses and coronavirus SARS-CoV-2, and also to the bacterial pathogen Listeria monocytogenes. Can bind both ssRNA and dsRNA, with a higher affinity for dsRNA. Shows a preference to 5'-triphosphorylated RNA, although it can recognize RNA lacking a 5'-triphosphate. The chain is ATP-dependent RNA helicase DHX58 from Homo sapiens (Human).